A 439-amino-acid chain; its full sequence is Magnesium-dependent glutamate N-prenyltransferase (439 aa).

Residues N322, T326, E330, and F337 each coordinate Mg(2+).

It belongs to the terpene synthase family. Requires Mg(2+) as cofactor.

It carries out the reaction dimethylallyl diphosphate + L-glutamate = prekainate + diphosphate. It participates in secondary metabolite biosynthesis. Magnesium-dependent glutamate N-prenyltransferase: part of the gene cluster that mediates the biosynthesis of kainic acid (KA) and derivatives, natural products with neurochemical activity acting as ionotropic glutamate receptor (iGluR) agonists, thus being neurotoxins. Catalyzes the conversion of L-glutamic acid (L-Glu) to prekainic acid in the presence of dimethylallyl diphosphate (DMAPP). Can also use geranyl diphosphate (GPP) as substrate, thus leading to the formation of N-geranyl-L-glutamic acid (L-NGG). The polypeptide is Magnesium-dependent glutamate N-prenyltransferase (Digenea simplex (Marine red alga)).